The sequence spans 626 residues: Deoxynucleoside triphosphate triphosphohydrolase SAMHD1 (626 aa).

M1 carries the post-translational modification N-acetylmethionine. The segment covering 1-19 (MQRADSEQPSKRPRCDDSP) has biased composition (basic and acidic residues). The tract at residues 1–36 (MQRADSEQPSKRPRCDDSPRTPSNTPSAEADWSPGL) is disordered. Position 18 is a phosphoserine (S18). 2 positions are modified to phosphothreonine: T21 and T25. Phosphoserine occurs at positions 33 and 93. Positions 45–110 (WGPEQVCSFL…LSYIQRLVQI (66 aa)) constitute an SAM domain. GTP is bound by residues K116 and V117. N119 is a binding site for dATP. N119 is a dCTP binding site. Residue N119 participates in dGTP binding. N119 contacts dTTP. 3 residues coordinate GTP: D137, Q142, and R145. Q149 contacts dATP. Q149 provides a ligand contact to dCTP. Residues Q149, L150, V156, and R164 each coordinate dGTP. Q149 serves as a coordination point for dTTP. V156 and R164 together coordinate dATP. DCTP is bound by residues V156 and R164. DTTP is bound by residues V156 and R164. Residues 164–316 (RFEHSLGVGY…GIDVDKWDYF (153 aa)) form the HD domain. Mn(2+) is bound by residues H167, H206, and D207. Residues H210 and H215 each contribute to the dATP site. Positions 210 and 215 each coordinate dCTP. DTTP is bound by residues H210 and H215. Residue H233 is part of the active site. Residue D311 participates in Mn(2+) binding. DATP-binding residues include K312, Y315, D319, R333, R352, K354, N358, and R366. Positions 312, 315, 319, 333, 352, and 354 each coordinate dCTP. DGTP-binding residues include K312, Y315, D319, R333, R352, K354, N358, and R366. Residues K312, Y315, D319, R333, R352, and K354 each coordinate dTTP. Residues R366 and R372 each contribute to the dCTP site. DGTP is bound by residues Y374, Q375, H376, and K377. Residues Q375, H376, and K377 each contribute to the dATP site. DCTP contacts are provided by Q375, H376, and K377. Positions 375, 376, and 377 each coordinate dTTP. Residues R451 and K455 each coordinate GTP. Residues K467, K469, and K492 each participate in a glycyl lysine isopeptide (Lys-Gly) (interchain with G-Cter in SUMO2) cross-link. K523 contacts GTP. K523 serves as a coordination point for dATP. Position 523 (K523) interacts with dCTP. K523 serves as a coordination point for dGTP. K523 provides a ligand contact to dTTP. A (Microbial infection) Phosphothreonine modification is found at T592. At T592 the chain carries Phosphothreonine; by CDK1. K622 is covalently cross-linked (Glycyl lysine isopeptide (Lys-Gly) (interchain with G-Cter in SUMO2)).

This sequence belongs to the SAMHD1 family. As to quaternary structure, homodimer; in absence of GTP and dNTP. Homotetramer; in GTP- and dNTP-bound form. Interacts with MRE11; leading to stimulate the exonuclease activity of MRE11. Interacts with RBBP8/CtIP. Interacts (via its C-terminus) with CD81. (Microbial infection) Interacts with HIV-2 viral protein Vpx; promoting interaction with a E3 ubiquitin-protein ligase complex containing DCAF1, leading to subsequent ubiquitination and degradation of SAMHD1. Requires Mn(2+) as cofactor. Post-translationally, phosphorylation at Thr-592 by CDK1 acts as a switch to control deoxynucleoside triphosphate (dNTPase)-dependent and -independent functions. Phosphorylation at Thr-592 takes place in cycling cells: it reduces the stability of the homotetramer, impairing the dNTPase activity and subsequent ability to restrict infection by viruses. It also inhibits ability to suppress LINE-1 retrotransposon activity. In contrast, phosphorylation at Thr-592 promotes DNA end resection at stalled replication forks in response to DNA damage. In terms of processing, (Microbial infection) Phosphorylation at Thr-592 by Epstein-Barr virus kinase BGLF4 and human cytomegalovirus/HCMV UL97 leads to a reduced level of dCTPase and dTTPase activity and the loss of viral restriction. (Microbial infection) Ubiquitinated following interaction with HIV-2 viral protein Vpx; Vpx promotes interaction and with a DCX (DDB1-CUL4-X-box) E3 ubiquitin ligase, leading to proteasomal degradation. In terms of tissue distribution, expressed in heart, skeletal muscle, spleen, liver, small intestine, placenta, lung and peripheral blood leukocytes. No expression is seen in brain and thymus.

Its subcellular location is the nucleus. It localises to the chromosome. It carries out the reaction a 2'-deoxyribonucleoside 5'-triphosphate + H2O = a 2'-deoxyribonucleoside + triphosphate + H(+). The enzyme catalyses dATP + H2O = 2'-deoxyadenosine + triphosphate + H(+). It catalyses the reaction dCTP + H2O = 2'-deoxycytidine + triphosphate + H(+). The catalysed reaction is dGTP + H2O = 2'-deoxyguanosine + triphosphate + H(+). It carries out the reaction dTTP + H2O = thymidine + triphosphate + H(+). Its activity is regulated as follows. Allosterically activated and regulated via the combined actions of GTP and dNTPs (dATP, dGTP, dTTP and dCTP): Allosteric site 1 binds GTP, while allosteric site 2 binds dNTP. Allosteric activation promotes the formation of highly active homotetramers. Phosphorylation at Thr-592 impairs homotetramerization, thereby inhibiting dNTPase activity, leading to reduced ability to restrict infection by viruses. Functionally, protein that acts both as a host restriction factor involved in defense response to virus and as a regulator of DNA end resection at stalled replication forks. Has deoxynucleoside triphosphate (dNTPase) activity, which is required to restrict infection by viruses, such as HIV-1: dNTPase activity reduces cellular dNTP levels to levels too low for retroviral reverse transcription to occur, blocking early-stage virus replication in dendritic and other myeloid cells. Likewise, suppresses LINE-1 retrotransposon activity. Not able to restrict infection by HIV-2 virus; because restriction activity is counteracted by HIV-2 viral protein Vpx. In addition to virus restriction, dNTPase activity acts as a regulator of DNA precursor pools by regulating dNTP pools. Phosphorylation at Thr-592 acts as a switch to control dNTPase-dependent and -independent functions: it inhibits dNTPase activity and ability to restrict infection by viruses, while it promotes DNA end resection at stalled replication forks. Functions during S phase at stalled DNA replication forks to promote the resection of gapped or reversed forks: acts by stimulating the exonuclease activity of MRE11, activating the ATR-CHK1 pathway and allowing the forks to restart replication. Its ability to promote degradation of nascent DNA at stalled replication forks is required to prevent induction of type I interferons, thereby preventing chronic inflammation. Ability to promote DNA end resection at stalled replication forks is independent of dNTPase activity. Enhances immunoglobulin hypermutation in B-lymphocytes by promoting transversion mutation. This is Deoxynucleoside triphosphate triphosphohydrolase SAMHD1 from Homo sapiens (Human).